The chain runs to 473 residues: Fumarate hydratase class II (473 aa).

Residues 105–107 (SGT), 130–133 (HPND), 140–142 (SSN), and Thr188 contribute to the substrate site. His189 functions as the Proton donor/acceptor in the catalytic mechanism. Residue Ser319 is part of the active site. Residues Ser320 and 325 to 327 (KVN) contribute to the substrate site.

It belongs to the class-II fumarase/aspartase family. Fumarase subfamily. As to quaternary structure, homotetramer.

The protein localises to the cytoplasm. The catalysed reaction is (S)-malate = fumarate + H2O. It participates in carbohydrate metabolism; tricarboxylic acid cycle; (S)-malate from fumarate: step 1/1. Its function is as follows. Involved in the TCA cycle. Catalyzes the stereospecific interconversion of fumarate to L-malate. The polypeptide is Fumarate hydratase class II (Xylella fastidiosa (strain Temecula1 / ATCC 700964)).